A 336-amino-acid polypeptide reads, in one-letter code: Acetyl-coenzyme A carboxylase carboxyl transferase subunit beta (336 aa).

Positions 27 to 297 constitute a CoA carboxyltransferase N-terminal domain; it reads LWTKCESCQG…VAPAPAPAAT (271 aa). Zn(2+)-binding residues include cysteine 31, cysteine 34, cysteine 50, and cysteine 53. A C4-type zinc finger spans residues 31 to 53; that stretch reads CESCQGILYRPDLERNLEVCPKC. Positions 287 to 336 are disordered; the sequence is SVAPAPAPAATVDPEPESAEPEAPAEEAGPAGAAGDQAGESQDEGDPRNA. Residues 300-311 show a composition bias toward acidic residues; the sequence is PEPESAEPEAPA. Residues 312-326 are compositionally biased toward low complexity; it reads EEAGPAGAAGDQAGE.

Belongs to the AccD/PCCB family. Acetyl-CoA carboxylase is a heterohexamer composed of biotin carboxyl carrier protein (AccB), biotin carboxylase (AccC) and two subunits each of ACCase subunit alpha (AccA) and ACCase subunit beta (AccD). The cofactor is Zn(2+).

It localises to the cytoplasm. The enzyme catalyses N(6)-carboxybiotinyl-L-lysyl-[protein] + acetyl-CoA = N(6)-biotinyl-L-lysyl-[protein] + malonyl-CoA. The protein operates within lipid metabolism; malonyl-CoA biosynthesis; malonyl-CoA from acetyl-CoA: step 1/1. In terms of biological role, component of the acetyl coenzyme A carboxylase (ACC) complex. Biotin carboxylase (BC) catalyzes the carboxylation of biotin on its carrier protein (BCCP) and then the CO(2) group is transferred by the transcarboxylase to acetyl-CoA to form malonyl-CoA. The polypeptide is Acetyl-coenzyme A carboxylase carboxyl transferase subunit beta (Halorhodospira halophila (strain DSM 244 / SL1) (Ectothiorhodospira halophila (strain DSM 244 / SL1))).